A 285-amino-acid chain; its full sequence is uncharacterized protein (285 aa).

The ATP-grasp domain maps to 107-285; it reads FLTVDTTIFD…KHHLKRQMIP (179 aa).

This is an uncharacterized protein from Mycoplasma pneumoniae (strain ATCC 29342 / M129 / Subtype 1) (Mycoplasmoides pneumoniae).